The following is a 198-amino-acid chain: Ribosome maturation factor RimM (198 aa).

Positions 1–21 are disordered; sequence MPPPTASTPDDSADPGPDFAD. The region spanning 122–195 is the PRC barrel domain; that stretch reads DDELFADDLV…RIVVRPIDGL (74 aa).

This sequence belongs to the RimM family. In terms of assembly, binds ribosomal protein uS19.

It localises to the cytoplasm. Functionally, an accessory protein needed during the final step in the assembly of 30S ribosomal subunit, possibly for assembly of the head region. Essential for efficient processing of 16S rRNA. May be needed both before and after RbfA during the maturation of 16S rRNA. It has affinity for free ribosomal 30S subunits but not for 70S ribosomes. The sequence is that of Ribosome maturation factor RimM from Salinibacter ruber (strain DSM 13855 / M31).